A 556-amino-acid polypeptide reads, in one-letter code: Genetic interactor of prohibitins 3, mitochondrial (556 aa).

The transit peptide at 1–21 (MLNLCHALRGVRQFSCSVIVK) directs the protein to the mitochondrion. The CP-type G domain occupies 113-305 (ESTLNDILNY…LFDLPGYSTS (193 aa)).

Belongs to the TRAFAC class YlqF/YawG GTPase family. GEP3 subfamily.

It localises to the mitochondrion. Its function is as follows. Interacts genetically with prohibitins and thus may be involved in the mitochondrial lipid metabolism. This chain is Genetic interactor of prohibitins 3, mitochondrial (GEP3), found in Saccharomyces cerevisiae (strain Lalvin EC1118 / Prise de mousse) (Baker's yeast).